The chain runs to 484 residues: Protein nucleotidyltransferase YdiU (484 aa).

Glycine 87, glycine 89, arginine 90, lysine 110, aspartate 122, glycine 123, arginine 173, and arginine 180 together coordinate ATP. The Proton acceptor role is filled by aspartate 249. Mg(2+)-binding residues include asparagine 250 and aspartate 259. Residue aspartate 259 coordinates ATP.

The protein belongs to the SELO family. It depends on Mg(2+) as a cofactor. Requires Mn(2+) as cofactor.

It carries out the reaction L-seryl-[protein] + ATP = 3-O-(5'-adenylyl)-L-seryl-[protein] + diphosphate. The catalysed reaction is L-threonyl-[protein] + ATP = 3-O-(5'-adenylyl)-L-threonyl-[protein] + diphosphate. It catalyses the reaction L-tyrosyl-[protein] + ATP = O-(5'-adenylyl)-L-tyrosyl-[protein] + diphosphate. The enzyme catalyses L-histidyl-[protein] + UTP = N(tele)-(5'-uridylyl)-L-histidyl-[protein] + diphosphate. It carries out the reaction L-seryl-[protein] + UTP = O-(5'-uridylyl)-L-seryl-[protein] + diphosphate. The catalysed reaction is L-tyrosyl-[protein] + UTP = O-(5'-uridylyl)-L-tyrosyl-[protein] + diphosphate. Nucleotidyltransferase involved in the post-translational modification of proteins. It can catalyze the addition of adenosine monophosphate (AMP) or uridine monophosphate (UMP) to a protein, resulting in modifications known as AMPylation and UMPylation. The protein is Protein nucleotidyltransferase YdiU of Lachnoclostridium phytofermentans (strain ATCC 700394 / DSM 18823 / ISDg) (Clostridium phytofermentans).